We begin with the raw amino-acid sequence, 148 residues long: Deoxyuridine 5'-triphosphate nucleotidohydrolase (148 aa).

Substrate is bound by residues 68-70 (RSG), asparagine 81, 85-87 (TID), and lysine 95.

Belongs to the dUTPase family. Mg(2+) is required as a cofactor.

It carries out the reaction dUTP + H2O = dUMP + diphosphate + H(+). The protein operates within pyrimidine metabolism; dUMP biosynthesis; dUMP from dCTP (dUTP route): step 2/2. In terms of biological role, this enzyme is involved in nucleotide metabolism: it produces dUMP, the immediate precursor of thymidine nucleotides and it decreases the intracellular concentration of dUTP so that uracil cannot be incorporated into DNA. This Rickettsia typhi (strain ATCC VR-144 / Wilmington) protein is Deoxyuridine 5'-triphosphate nucleotidohydrolase.